Here is a 380-residue protein sequence, read N- to C-terminus: Succinyl-diaminopimelate desuccinylase (380 aa).

His66 serves as a coordination point for Zn(2+). The active site involves Asp68. Position 99 (Asp99) interacts with Zn(2+). The active-site Proton acceptor is the Glu135. Positions 136, 164, and 350 each coordinate Zn(2+).

This sequence belongs to the peptidase M20A family. DapE subfamily. In terms of assembly, homodimer. Requires Zn(2+) as cofactor. Co(2+) is required as a cofactor.

The catalysed reaction is N-succinyl-(2S,6S)-2,6-diaminopimelate + H2O = (2S,6S)-2,6-diaminopimelate + succinate. It participates in amino-acid biosynthesis; L-lysine biosynthesis via DAP pathway; LL-2,6-diaminopimelate from (S)-tetrahydrodipicolinate (succinylase route): step 3/3. Catalyzes the hydrolysis of N-succinyl-L,L-diaminopimelic acid (SDAP), forming succinate and LL-2,6-diaminopimelate (DAP), an intermediate involved in the bacterial biosynthesis of lysine and meso-diaminopimelic acid, an essential component of bacterial cell walls. This is Succinyl-diaminopimelate desuccinylase from Magnetococcus marinus (strain ATCC BAA-1437 / JCM 17883 / MC-1).